Consider the following 202-residue polypeptide: FMN-dependent NADH:quinone oxidoreductase 2 (202 aa).

Residues Ser-9, 15 to 17 (SVS), 93 to 96 (MYNF), and 137 to 140 (SRGG) contribute to the FMN site.

It belongs to the azoreductase type 1 family. In terms of assembly, homodimer. The cofactor is FMN.

The catalysed reaction is 2 a quinone + NADH + H(+) = 2 a 1,4-benzosemiquinone + NAD(+). It carries out the reaction N,N-dimethyl-1,4-phenylenediamine + anthranilate + 2 NAD(+) = 2-(4-dimethylaminophenyl)diazenylbenzoate + 2 NADH + 2 H(+). Functionally, quinone reductase that provides resistance to thiol-specific stress caused by electrophilic quinones. Also exhibits azoreductase activity. Catalyzes the reductive cleavage of the azo bond in aromatic azo compounds to the corresponding amines. The polypeptide is FMN-dependent NADH:quinone oxidoreductase 2 (Bradyrhizobium diazoefficiens (strain JCM 10833 / BCRC 13528 / IAM 13628 / NBRC 14792 / USDA 110)).